The primary structure comprises 222 residues: Phosphoribosylformylglycinamidine synthase subunit PurQ (222 aa).

The region spanning 2–222 (KAAVITFPGS…RALLGGMALV (221 aa)) is the Glutamine amidotransferase type-1 domain. Cys-86 (nucleophile) is an active-site residue. Active-site residues include His-194 and Glu-196.

In terms of assembly, part of the FGAM synthase complex composed of 1 PurL, 1 PurQ and 2 PurS subunits.

It is found in the cytoplasm. The catalysed reaction is N(2)-formyl-N(1)-(5-phospho-beta-D-ribosyl)glycinamide + L-glutamine + ATP + H2O = 2-formamido-N(1)-(5-O-phospho-beta-D-ribosyl)acetamidine + L-glutamate + ADP + phosphate + H(+). The enzyme catalyses L-glutamine + H2O = L-glutamate + NH4(+). It functions in the pathway purine metabolism; IMP biosynthesis via de novo pathway; 5-amino-1-(5-phospho-D-ribosyl)imidazole from N(2)-formyl-N(1)-(5-phospho-D-ribosyl)glycinamide: step 1/2. Part of the phosphoribosylformylglycinamidine synthase complex involved in the purines biosynthetic pathway. Catalyzes the ATP-dependent conversion of formylglycinamide ribonucleotide (FGAR) and glutamine to yield formylglycinamidine ribonucleotide (FGAM) and glutamate. The FGAM synthase complex is composed of three subunits. PurQ produces an ammonia molecule by converting glutamine to glutamate. PurL transfers the ammonia molecule to FGAR to form FGAM in an ATP-dependent manner. PurS interacts with PurQ and PurL and is thought to assist in the transfer of the ammonia molecule from PurQ to PurL. The sequence is that of Phosphoribosylformylglycinamidine synthase subunit PurQ from Cereibacter sphaeroides (strain ATCC 17023 / DSM 158 / JCM 6121 / CCUG 31486 / LMG 2827 / NBRC 12203 / NCIMB 8253 / ATH 2.4.1.) (Rhodobacter sphaeroides).